Consider the following 246-residue polypeptide: Probable transcriptional regulatory protein KPK_1906 (246 aa).

It belongs to the TACO1 family.

It localises to the cytoplasm. This Klebsiella pneumoniae (strain 342) protein is Probable transcriptional regulatory protein KPK_1906.